Here is a 457-residue protein sequence, read N- to C-terminus: Multidrug resistance protein MdtK (457 aa).

Transmembrane regions (helical) follow at residues 11–31 (LLAL…MGFV), 53–73 (IWLP…PVIA), 93–113 (WLAG…GYII), 127–147 (AVGY…FQVA), 160–180 (GMVM…IFIY), 189–209 (GGVG…LAMV), 243–263 (LPIA…ALLV), 276–296 (IALN…AAVT), 314–334 (AART…IFTV), 350–370 (VVTL…SDSI), 387–407 (IFYI…YILA), and 418–438 (PAGF…MMML).

This sequence belongs to the multi antimicrobial extrusion (MATE) (TC 2.A.66.1) family. MdtK subfamily.

The protein localises to the cell inner membrane. Its function is as follows. Multidrug efflux pump that functions probably as a Na(+)/drug antiporter. The sequence is that of Multidrug resistance protein MdtK from Escherichia coli O9:H4 (strain HS).